The chain runs to 178 residues: Chorion class high-cysteine HCB protein 13 (178 aa).

The first 21 residues, 1–21 (MAAKLILFVCAIALVAQSVLG), serve as a signal peptide directing secretion. Residues 22–46 (TGCGCCCRGCGCGCGGCGSRCCDRF) form a left arm region. The segment at 47 to 110 (CLCSNSAAPT…GDGCVGITQS (64 aa)) is central domain. A right arm (Gly-rich tandem repeats) region spans residues 111–178 (CGGCGCGCGG…GCGCGGCGCC (68 aa)).

This sequence belongs to the chorion protein family.

Its function is as follows. This protein is one of many from the eggshell of the silk moth. The chain is Chorion class high-cysteine HCB protein 13 from Bombyx mori (Silk moth).